Here is a 439-residue protein sequence, read N- to C-terminus: tRNA-2-methylthio-N(6)-dimethylallyladenosine synthase (439 aa).

Residues 1 to 117 (MKFYIRTFGC…IGNLVKRALN (117 aa)) enclose the MTTase N-terminal domain. Residues C10, C46, C80, C153, C157, and C160 each contribute to the [4Fe-4S] cluster site. In terms of domain architecture, Radical SAM core spans 139–371 (PISKHHAWIT…MELQKRINLE (233 aa)). The 68-residue stretch at 369-436 (NLEENEKYLE…PGPLYGEVVN (68 aa)) folds into the TRAM domain.

It belongs to the methylthiotransferase family. MiaB subfamily. In terms of assembly, monomer. It depends on [4Fe-4S] cluster as a cofactor.

The protein resides in the cytoplasm. The catalysed reaction is N(6)-dimethylallyladenosine(37) in tRNA + (sulfur carrier)-SH + AH2 + 2 S-adenosyl-L-methionine = 2-methylsulfanyl-N(6)-dimethylallyladenosine(37) in tRNA + (sulfur carrier)-H + 5'-deoxyadenosine + L-methionine + A + S-adenosyl-L-homocysteine + 2 H(+). Its function is as follows. Catalyzes the methylthiolation of N6-(dimethylallyl)adenosine (i(6)A), leading to the formation of 2-methylthio-N6-(dimethylallyl)adenosine (ms(2)i(6)A) at position 37 in tRNAs that read codons beginning with uridine. The protein is tRNA-2-methylthio-N(6)-dimethylallyladenosine synthase of Petrotoga mobilis (strain DSM 10674 / SJ95).